The sequence spans 656 residues: Acyl-CoA-binding domain-containing protein 6 (656 aa).

The region spanning 8–102 (YPDRFYAAAA…LEEEDPGWYS (95 aa)) is the ACB domain. An acyl-CoA contacts are provided by residues 44 to 48 (YGLYQ) and K70. Residues 129–148 (ASTNGTSVPEPKTISENGSS) form a disordered region. Kelch repeat units follow at residues 194–241 (KMYI…AQVS), 254–304 (KFFS…LVGT), 305–354 (TLVL…CHAD), 356–405 (YLLI…TVGE), 406–454 (NWYI…LVHS), and 461–507 (YLIS…EPEV). The stretch at 527–636 (LKKDDANELL…EQAALEAKQR (110 aa)) forms a coiled coil. The interval 627–656 (EQAALEAKQRQSSSGMWGWLVGTPPDKSES) is disordered.

This sequence belongs to the ACBP family. In terms of tissue distribution, highly expressed in leaves. Expressed in roots and seeds.

Its subcellular location is the peroxisome. Binds medium- and long-chain acyl-CoA esters with high affinity. Can interact in vitro with linoleoyl-CoA and linolenoyl-CoA. Binds phosphatidic acid (PA) and phosphatidylcholine (PC) in vitro. May play a role in the biosynthesis of phospholipids. May be involved in lipid degradation via peroxisomal beta-oxydation. The protein is Acyl-CoA-binding domain-containing protein 6 of Oryza sativa subsp. japonica (Rice).